Reading from the N-terminus, the 165-residue chain is Transcription antitermination protein NusB (165 aa).

This sequence belongs to the NusB family.

In terms of biological role, involved in transcription antitermination. Required for transcription of ribosomal RNA (rRNA) genes. Binds specifically to the boxA antiterminator sequence of the ribosomal RNA (rrn) operons. The chain is Transcription antitermination protein NusB from Chlorobium phaeobacteroides (strain DSM 266 / SMG 266 / 2430).